The sequence spans 449 residues: Protein tweety homolog 1 (449 aa).

At 1-43 the chain is on the extracellular side; it reads MSSSHGYRASWWTYILHQVPHTNFQFEVVDNQFAPQEWPYQQA. The chain crosses the membrane as a helical span at residues 44-64; that stretch reads LLFLASIAGLCLAISLILICV. Over 65-86 the chain is Cytoplasmic; that stretch reads YLIRFCCCSSQEDDDSKSHRVC. A helical membrane pass occupies residues 87–107; it reads CVTWSCVAAVIICCAGIGIGF. The Extracellular portion of the chain corresponds to 108 to 212; it reads YGNSETNDGV…QVNFIEDYRW (105 aa). A glycan (N-linked (GlcNAc...) asparagine) is linked at N128. Residues 213–233 form a helical membrane-spanning segment; the sequence is LAYILLLLLDLIICLFTLLGL. The Cytoplasmic portion of the chain corresponds to 234-238; sequence AKQIK. A helical transmembrane segment spans residues 239–259; sequence WLVIVMTVVSFFVLLLSWGSM. At 260–388 the chain is on the extracellular side; the sequence is GLEMATAVGL…LKGLCYDGME (129 aa). Cystine bridges form between C273–C383 and C301–C368. Residues N282 and N353 are each glycosylated (N-linked (GlcNAc...) asparagine). The helical transmembrane segment at 389 to 409 threads the bilayer; sequence GILFLLLFSFLSALSFTAAIC. The Cytoplasmic segment spans residues 410–449; it reads SLPRAWKRFQNRDLDYDDMDEDDPFNPQESKRFVQWQSSI.

It belongs to the tweety family. Homotetramer; disulfide-linked. Homodimer.

Its subcellular location is the cell membrane. The enzyme catalyses chloride(in) = chloride(out). The catalysed reaction is L-glutamate(out) = L-glutamate(in). Its function is as follows. May act as a calcium-independent, swelling-dependent volume-regulated anion channel (VRAC-swell) which plays a pivotal role in the process of regulatory volume decrease (RVD) in the brain through the efflux of anions like chloride and organic osmolytes like glutamate. In Xenopus tropicalis (Western clawed frog), this protein is Protein tweety homolog 1 (ttyh1).